Reading from the N-terminus, the 290-residue chain is MSAHLILIDALNLIRRVYAVQERPFIQIKQDHDDELSASTLKQVLFNTQNTCVNALIKIIDQHQPTHALTVFDSQEPCWRYQLFEGYKKGRKKMPDHLANKLIDIQDAFMEQGVDSLTSDEDEADDLIATLAVKMALHGQKVTIISTDKGFLPLLSPNIHIYDYFNRRYLDEEHVQSKFSVKTSQLIDFWTLTGDNTNKIEGVSGIGQVTAAKLLNQYGSLKAILEATDLKDSLAEKLTQSLEQMDLARKLLTLKQDIPLGFNLKDIRLTTSSSAHEINANINLTTDDKS.

D125 provides a ligand contact to Mg(2+). Positions 181 to 275 (VKTSQLIDFW…DIRLTTSSSA (95 aa)) constitute a 5'-3' exonuclease domain. The K(+) site is built by L192, V203, and I206. Residues 205 to 210 (GIGQVT) are interaction with DNA.

This sequence belongs to the Xni family. Requires Mg(2+) as cofactor. K(+) is required as a cofactor.

In terms of biological role, has flap endonuclease activity. During DNA replication, flap endonucleases cleave the 5'-overhanging flap structure that is generated by displacement synthesis when DNA polymerase encounters the 5'-end of a downstream Okazaki fragment. The sequence is that of Flap endonuclease Xni from Colwellia psychrerythraea (strain 34H / ATCC BAA-681) (Vibrio psychroerythus).